We begin with the raw amino-acid sequence, 550 residues long: Glypican-1 (550 aa).

Positions 1–20 (MRFFPWGFWLLCVASAPARG) are cleaved as a signal peptide. 7 disulfide bridges follow: Cys29/Cys65, Cys59/Cys253, Cys66/Cys256, Cys188/Cys340, Cys243/Cys276, Cys265/Cys412, and Cys269/Cys398. Asn76 and Asn113 each carry an N-linked (GlcNAc...) asparagine glycan. Asn382 carries an N-linked (GlcNAc...) asparagine glycan. Disordered regions lie at residues 475–494 (FQDA…CPDD) and 502–522 (KSPS…GHGV). Low complexity predominate over residues 481-494 (DMSGSGSGDSCPDD). Residues Ser483, Ser485, and Ser487 are each glycosylated (O-linked (Xyl...) (heparan sulfate) serine). The GPI-anchor amidated glycine moiety is linked to residue Gly524. Residues 525–550 (ASSRSLPSAFLLFLSGASIVVQHLWR) constitute a propeptide, removed in mature form.

The protein belongs to the glypican family. In terms of processing, O-glycosylated with heparan sulfate.

The protein localises to the cell membrane. The protein resides in the endosome. It localises to the secreted. Its subcellular location is the extracellular space. Functionally, cell surface proteoglycan that bears heparan sulfate. Modulates Wnt-signaling pathway. This Gallus gallus (Chicken) protein is Glypican-1 (GPC1).